The sequence spans 339 residues: Serine racemase (339 aa).

Residue Glu-13 coordinates Mg(2+). ATP is bound by residues Ser-31, Ser-32, Ile-33, Lys-51, and Thr-52. The Proton acceptor role is filled by Lys-56. Lys-56 bears the N6-(pyridoxal phosphate)lysine mark. Pro-69 contributes to the Ca(2+) binding site. A Phosphothreonine modification is found at Thr-71. Thr-81 lines the Ca(2+) pocket. Ser-84 (proton acceptor) is an active-site residue. Asn-86 contributes to the pyridoxal 5'-phosphate binding site. Gln-89 contacts ATP. Cys-113 is modified (S-nitrosocysteine). Tyr-121 provides a ligand contact to ATP. Asn-154 serves as a coordination point for pyridoxal 5'-phosphate. Residue Asp-178 participates in Mg(2+) binding. 5 residues coordinate pyridoxal 5'-phosphate: Gly-185, Gly-186, Gly-187, Gly-188, and Met-189. 4 residues coordinate Mg(2+): Glu-210, Ala-214, Asp-216, and Asn-247. Ca(2+)-binding residues include Glu-210, Ala-214, Asp-216, and Asn-247. The Mn(2+) site is built by Glu-210, Ala-214, and Asp-216. Residue Lys-279 coordinates ATP. Ser-313 contributes to the pyridoxal 5'-phosphate binding site. ATP is bound at residue Asn-316.

It belongs to the serine/threonine dehydratase family. In terms of assembly, homodimer. Requires Mg(2+) as cofactor. Mn(2+) is required as a cofactor. Ca(2+) serves as cofactor. It depends on pyridoxal 5'-phosphate as a cofactor. In terms of processing, S-nitrosylated, leading to decrease the enzyme activity. In terms of tissue distribution, expressed in the hippocampus (at protein level). Expressed in the small intestine.

It catalyses the reaction L-serine = D-serine. The enzyme catalyses D-serine = pyruvate + NH4(+). The catalysed reaction is L-serine = pyruvate + NH4(+). Its activity is regulated as follows. Allosterically activated by magnesium, and possibly also other divalent metal cations. Allosterically activated by ATP, ADP or GTP. Catalyzes the synthesis of D-serine from L-serine. D-serine is a key coagonist with glutamate at NMDA receptors. Has dehydratase activity towards both L-serine and D-serine. In Mus musculus (Mouse), this protein is Serine racemase (Srr).